The following is a 131-amino-acid chain: Large ribosomal subunit protein bL19 (131 aa).

This sequence belongs to the bacterial ribosomal protein bL19 family.

In terms of biological role, this protein is located at the 30S-50S ribosomal subunit interface and may play a role in the structure and function of the aminoacyl-tRNA binding site. In Anaeromyxobacter sp. (strain K), this protein is Large ribosomal subunit protein bL19.